Reading from the N-terminus, the 313-residue chain is MSSIDPKQFGKVAVLLGGNSAEREVSLNSGRLVLQGLRDAGVDAHPFDPAERPLAALKEEGFVRAFNALHGGYGENGQIQGALDFYGIKYTGSGVLGSALGLDKFRTKLVWQQLGIPTPPFEAVLRGDDYEARSKEIVAKLGLPLFVKPASEGSSVAVIKVKSADALPAALIEAVKYDKIVVVEKSVEGGGEYTACIAGNLDLPVIRIVPAGEFYDYHAKYIANDTQYLIPCGLAADEEARLKVLARRAFDVLGCTDWGRADFMLDADGNPYFLEVNTAPGMTDHSLPPKAARAVGISYQELVVGVLALTLQD.

Positions K108–A308 constitute an ATP-grasp domain. V138–Y193 contributes to the ATP binding site. Mg(2+) contacts are provided by D262, E275, and N277.

The protein belongs to the D-alanine--D-alanine ligase family. Mg(2+) serves as cofactor. Mn(2+) is required as a cofactor.

It localises to the cytoplasm. The catalysed reaction is 2 D-alanine + ATP = D-alanyl-D-alanine + ADP + phosphate + H(+). It functions in the pathway cell wall biogenesis; peptidoglycan biosynthesis. In terms of biological role, cell wall formation. In Paraburkholderia phytofirmans (strain DSM 17436 / LMG 22146 / PsJN) (Burkholderia phytofirmans), this protein is D-alanine--D-alanine ligase.